The chain runs to 223 residues: Putative C-type lectin protein 51 (223 aa).

Residues 1-31 (MAKRINFTSCLIFTSCFTAFIVSLCLLVSSC) form the signal peptide. The region spanning 111 to 218 (QEGRCYHYSR…CDTPRRCLCG (108 aa)) is the C-type lectin domain. An intrachain disulfide couples C193 to C209.

The polypeptide is Putative C-type lectin protein 51 (51) (Equine herpesvirus 2 (strain 86/87) (EHV-2)).